Reading from the N-terminus, the 700-residue chain is Cap-specific mRNA (nucleoside-2'-O-)-methyltransferase 2 (700 aa).

The disordered stretch occupies residues 1–21 (MSFRSSPQGKPHPMTDYQSIR). Residues 109–321 (EFVTVAWCKL…VYVICLNYNK (213 aa)) enclose the Adrift-type SAM-dependent 2'-O-MTase domain. Lysine 117 is a catalytic residue. S-adenosyl-L-methionine-binding residues include glycine 143, tryptophan 164, and aspartate 234. The active site involves aspartate 234. Lysine 274 serves as the catalytic Proton acceptor.

It localises to the nucleus. The catalysed reaction is a 5'-end (N(7)-methyl 5'-triphosphoguanosine)-(2'-O-methyl-ribonucleoside)-(ribonucleotide) in mRNA + S-adenosyl-L-methionine = a 5'-end (N(7)-methyl 5'-triphosphoguanosine)-(2'-O-methyl-ribonucleoside)-(2'-O-methyl-ribonucleotide) in mRNA + S-adenosyl-L-homocysteine + H(+). Probable S-adenosyl-L-methionine-dependent methyltransferase that mediates mRNA cap2 2'-O-ribose methylation to the 5'-cap structure of mRNAs. May methylate the ribose of the second nucleotide of a m(7)GpppG-capped mRNA (cap0) to produce m(7)GpppRmpNm (cap2). Regulates expression of tracheal genes required for pathfinding on the segmental nerve. The chain is Cap-specific mRNA (nucleoside-2'-O-)-methyltransferase 2 (cmtr2) from Drosophila melanogaster (Fruit fly).